The sequence spans 539 residues: Fucosyltransferase 2 (539 aa).

Over M1–E5 the chain is Cytoplasmic. The helical; Signal-anchor for type II membrane protein transmembrane segment at I6–Y26 threads the bilayer. The Lumenal portion of the chain corresponds to D27–F539. N44, N231, and N482 each carry an N-linked (GlcNAc...) asparagine glycan.

This sequence belongs to the glycosyltransferase 37 family. In terms of tissue distribution, expressed in roots, stems, leaves, flowers, siliques and seedlings.

It localises to the golgi apparatus. The protein localises to the golgi stack membrane. It functions in the pathway protein modification; protein glycosylation. Functionally, may be involved in cell wall biosynthesis. May act as a fucosyltransferase. This is Fucosyltransferase 2 (FUT2) from Arabidopsis thaliana (Mouse-ear cress).